A 258-amino-acid chain; its full sequence is Aspartate/glutamate leucyltransferase (258 aa).

It belongs to the R-transferase family. Bpt subfamily.

It is found in the cytoplasm. It carries out the reaction N-terminal L-glutamyl-[protein] + L-leucyl-tRNA(Leu) = N-terminal L-leucyl-L-glutamyl-[protein] + tRNA(Leu) + H(+). The enzyme catalyses N-terminal L-aspartyl-[protein] + L-leucyl-tRNA(Leu) = N-terminal L-leucyl-L-aspartyl-[protein] + tRNA(Leu) + H(+). In terms of biological role, functions in the N-end rule pathway of protein degradation where it conjugates Leu from its aminoacyl-tRNA to the N-termini of proteins containing an N-terminal aspartate or glutamate. The protein is Aspartate/glutamate leucyltransferase of Rhizobium leguminosarum bv. trifolii (strain WSM2304).